We begin with the raw amino-acid sequence, 415 residues long: Erythronolide mycarosyltransferase (415 aa).

It belongs to the glycosyltransferase 28 family.

The enzyme catalyses dTDP-beta-L-mycarose + erythronolide B = 3-O-alpha-L-mycarosylerythronolide B + dTDP + H(+). Involved in the biosynthesis of the macrolide antibiotic erythromycin. Catalyzes the reversible transfer of mycarosyl from dTDP-beta-L-mycarose to erythronolide B to yield 3-alpha-L-mycarosylerythronolide B. It can also use TDP-beta-L-cladinose. The chain is Erythronolide mycarosyltransferase from Saccharopolyspora erythraea (Streptomyces erythraeus).